Consider the following 188-residue polypeptide: PRA1 family protein 3 (188 aa).

The residue at position 1 (methionine 1) is an N-acetylmethionine. Residues 1-35 are Cytoplasmic-facing; sequence MEVQVAPLRSWEDFFPGSDRFGRPDFKDISKWNNR. The next 2 membrane-spanning stretches (helical) occupy residues 36 to 56 and 57 to 77; these read VVNNLLYYQTNYLMVAAAVVA and IVGFLSPLNMLIGGTVVILVF. Residues 78–93 lie on the Cytoplasmic side of the membrane; sequence LGFVWVSHNKDILRRM. The next 2 membrane-spanning stretches (helical) occupy residues 94-114 and 115-135; these read KKQYPTTFVIVIMLSSYFLIS and YLGDVMVFMFGITLPLLLMFI. At 136–188 the chain is on the cytoplasmic side; the sequence is HASLRLRNIKNKLENKKEEIGLKKTPMGIILDALEQQEDNINKLASYIPKVKE. The tract at residues 136–188 is targeting to endoplasmic reticulum membrane; that stretch reads HASLRLRNIKNKLENKKEEIGLKKTPMGIILDALEQQEDNINKLASYIPKVKE.

Belongs to the PRA1 family. Binds to prenylated RAB and Ras superfamily members.

It localises to the endoplasmic reticulum membrane. The protein resides in the cell membrane. Its subcellular location is the cytoplasm. It is found in the cytoskeleton. In terms of biological role, regulates intracellular concentrations of taurine and glutamate. Negatively modulates SLC1A1/EAAC1 glutamate transport activity by decreasing its affinity for glutamate in a PKC activity-dependent manner. May be involved in membrane traffic. The sequence is that of PRA1 family protein 3 (ARL6IP5) from Gallus gallus (Chicken).